A 382-amino-acid polypeptide reads, in one-letter code: Mannitol-1-phosphate 5-dehydrogenase (382 aa).

3–14 (ALHFGAGNIGRG) is a binding site for NAD(+).

The protein belongs to the mannitol dehydrogenase family.

It carries out the reaction D-mannitol 1-phosphate + NAD(+) = beta-D-fructose 6-phosphate + NADH + H(+). This is Mannitol-1-phosphate 5-dehydrogenase (mtlD) from Klebsiella pneumoniae.